The chain runs to 338 residues: UPF0324 membrane protein NMA0465 (338 aa).

10 helical membrane passes run 5–23 (PFYFGLIFIAIIAILANYL), 33–55 (HISALIIAILLGMAIGNTIYPQF), 62–84 (GVLFAKGALLRTGIVLYGFRLTF), 94–116 (AVVTDAIMLISTFFFTVLLGIRY), 123–145 (LVYLTGAGCSICGAAAVMAAESV), 155–177 (VAIAIVVIFGTLAIFTYPLFYTW), 222–239 (IRVMMLAPFLLMLSWLLT), 254–273 (IPWFAVLFIGVAIFNSFDLL), 280–302 (LFVEIDSFLLISSMAALGLTTHA), and 312–334 (PFVLGILTYLWLVVGGFLVNYGI).

The protein belongs to the UPF0324 family.

Its subcellular location is the cell membrane. The protein is UPF0324 membrane protein NMA0465 of Neisseria meningitidis serogroup A / serotype 4A (strain DSM 15465 / Z2491).